Consider the following 443-residue polypeptide: MSKLNMTPREIVAYLDEYIIGQKEAKKSIAIAFRNRYRRLQLEKSLQEEITPKNILMIGSTGVGKTEIARRIAKIMELPFVKVEASKYTEVGFVGRDVESMVRDLVNNSVLLVENEHKEKLKDKIEEAVIEKIAKKLLPPLPSGVSEEKKQEYANSLLKMQQRIAQGELDSREIEIEVRKKSIEIDSNVPPEILRVQENLIKVFHKEQDKVKKTLSVKEAKEALKAEISDTLLDSEAIKMEGLKRAESSGVIFIDEIDKIAVSSKEGSRQDPSKEGVQRDLLPIVEGSVVNTKYGSIKTEHILFIAAGAFHLSKPSDLIPELQGRFPLRVELENLTEEIMYMILTQTKTSIIKQYQALLKVEGVGIAFEDDAIKELAKLSYNANQKSEDIGARRLHTTIEKVLEDISFEAEDYSGQKVTITKELVQSKLEDLVADENLVKYIL.

ATP contacts are provided by residues Ile-20, Gly-62–Glu-67, Asp-255, Glu-321, and Arg-393.

The protein belongs to the ClpX chaperone family. HslU subfamily. A double ring-shaped homohexamer of HslV is capped on each side by a ring-shaped HslU homohexamer. The assembly of the HslU/HslV complex is dependent on binding of ATP.

The protein localises to the cytoplasm. In terms of biological role, ATPase subunit of a proteasome-like degradation complex; this subunit has chaperone activity. The binding of ATP and its subsequent hydrolysis by HslU are essential for unfolding of protein substrates subsequently hydrolyzed by HslV. HslU recognizes the N-terminal part of its protein substrates and unfolds these before they are guided to HslV for hydrolysis. In Helicobacter pylori (strain P12), this protein is ATP-dependent protease ATPase subunit HslU.